The following is a 322-amino-acid chain: uncharacterized protein (322 aa).

Disordered regions lie at residues 1 to 51 and 107 to 130; these read MARS…GAWA and QERQ…DRPD. Positions 119 to 130 are enriched in basic and acidic residues; sequence LHLEPGNEDRPD.

Expressed in skin and fetal lung.

This is an uncharacterized protein from Homo sapiens (Human).